Consider the following 369-residue polypeptide: Peptide chain release factor 2 (369 aa).

Glutamine 249 bears the N5-methylglutamine mark.

The protein belongs to the prokaryotic/mitochondrial release factor family. In terms of processing, methylated by PrmC. Methylation increases the termination efficiency of RF2.

Its subcellular location is the cytoplasm. Functionally, peptide chain release factor 2 directs the termination of translation in response to the peptide chain termination codons UGA and UAA. In Thermosipho africanus (strain TCF52B), this protein is Peptide chain release factor 2.